The following is a 269-amino-acid chain: Phosphatidylglycerol--prolipoprotein diacylglyceryl transferase (269 aa).

3 helical membrane-spanning segments follow: residues 21 to 41, 54 to 74, and 88 to 108; these read WYGIIIASAVILAVYLSVLEG, LLLYSLPVAIICARIYYVVFE, and IWDGGIAIYGALIGAVIVILI. Arginine 136 serves as a coordination point for a 1,2-diacyl-sn-glycero-3-phospho-(1'-sn-glycerol). Helical transmembrane passes span 206–226 and 236–256; these read GEVVLSYIIWYSFGRFFIEGM and LRVSQWLSLILFISAIAAIFY.

The protein belongs to the Lgt family.

Its subcellular location is the cell membrane. The catalysed reaction is L-cysteinyl-[prolipoprotein] + a 1,2-diacyl-sn-glycero-3-phospho-(1'-sn-glycerol) = an S-1,2-diacyl-sn-glyceryl-L-cysteinyl-[prolipoprotein] + sn-glycerol 1-phosphate + H(+). It functions in the pathway protein modification; lipoprotein biosynthesis (diacylglyceryl transfer). Functionally, catalyzes the transfer of the diacylglyceryl group from phosphatidylglycerol to the sulfhydryl group of the N-terminal cysteine of a prolipoprotein, the first step in the formation of mature lipoproteins. The polypeptide is Phosphatidylglycerol--prolipoprotein diacylglyceryl transferase (Ligilactobacillus salivarius (strain UCC118) (Lactobacillus salivarius)).